The primary structure comprises 295 residues: Pyridoxal 5'-phosphate synthase subunit PdxS (295 aa).

Position 25 (D25) interacts with D-ribose 5-phosphate. The Schiff-base intermediate with D-ribose 5-phosphate role is filled by K82. G154 provides a ligand contact to D-ribose 5-phosphate. R166 lines the D-glyceraldehyde 3-phosphate pocket. D-ribose 5-phosphate is bound by residues G215 and 236-237 (GS).

The protein belongs to the PdxS/SNZ family. In terms of assembly, in the presence of PdxT, forms a dodecamer of heterodimers.

The catalysed reaction is aldehydo-D-ribose 5-phosphate + D-glyceraldehyde 3-phosphate + L-glutamine = pyridoxal 5'-phosphate + L-glutamate + phosphate + 3 H2O + H(+). Its pathway is cofactor biosynthesis; pyridoxal 5'-phosphate biosynthesis. Functionally, catalyzes the formation of pyridoxal 5'-phosphate from ribose 5-phosphate (RBP), glyceraldehyde 3-phosphate (G3P) and ammonia. The ammonia is provided by the PdxT subunit. Can also use ribulose 5-phosphate and dihydroxyacetone phosphate as substrates, resulting from enzyme-catalyzed isomerization of RBP and G3P, respectively. This chain is Pyridoxal 5'-phosphate synthase subunit PdxS, found in Bacillus cereus (strain 03BB102).